The chain runs to 289 residues: Leucine--tRNA ligase subunit beta (289 aa).

A 'KMSKS' region motif is present at residues 45–49; that stretch reads KMSKS. Position 48 (K48) interacts with ATP.

Belongs to the class-I aminoacyl-tRNA synthetase family. Seems to consist of an alpha chain and a beta chain.

It localises to the cytoplasm. It catalyses the reaction tRNA(Leu) + L-leucine + ATP = L-leucyl-tRNA(Leu) + AMP + diphosphate. The protein is Leucine--tRNA ligase subunit beta (leuS') of Aquifex aeolicus (strain VF5).